We begin with the raw amino-acid sequence, 690 residues long: Elongation factor G (690 aa).

Residues 8–283 (SRCRNIGIMA…AVVDFLPSPS (276 aa)) form the tr-type G domain. Residues 17–24 (AHIDAGKT), 81–85 (DTPGH), and 135–138 (NKMD) each bind GTP.

It belongs to the TRAFAC class translation factor GTPase superfamily. Classic translation factor GTPase family. EF-G/EF-2 subfamily.

The protein resides in the cytoplasm. Its function is as follows. Catalyzes the GTP-dependent ribosomal translocation step during translation elongation. During this step, the ribosome changes from the pre-translocational (PRE) to the post-translocational (POST) state as the newly formed A-site-bound peptidyl-tRNA and P-site-bound deacylated tRNA move to the P and E sites, respectively. Catalyzes the coordinated movement of the two tRNA molecules, the mRNA and conformational changes in the ribosome. In Anaplasma marginale (strain Florida), this protein is Elongation factor G.